A 355-amino-acid polypeptide reads, in one-letter code: D-alanine--D-alanine ligase (355 aa).

The ATP-grasp domain maps to 143–350 (KTIFSNHKLP…IEQLVAKLVD (208 aa)). 178 to 233 (LKKLKFPVFVKPSNSGSSLGISKVKNESEILLALEKAWGIDPRILIEEGLEVREIE) is a binding site for ATP. Residues Asp-303, Glu-317, and Asn-319 each contribute to the Mg(2+) site.

This sequence belongs to the D-alanine--D-alanine ligase family. It depends on Mg(2+) as a cofactor. Mn(2+) serves as cofactor.

Its subcellular location is the cytoplasm. The catalysed reaction is 2 D-alanine + ATP = D-alanyl-D-alanine + ADP + phosphate + H(+). The protein operates within cell wall biogenesis; peptidoglycan biosynthesis. Cell wall formation. In Prochlorococcus marinus (strain MIT 9301), this protein is D-alanine--D-alanine ligase.